A 151-amino-acid polypeptide reads, in one-letter code: Prolamin PPROL 14P (151 aa).

The signal sequence occupies residues methionine 1–alanine 19. Glutamine 20 carries the post-translational modification Pyrrolidone carboxylic acid.

The protein belongs to the prolamin family.

It is found in the vacuole. The protein resides in the aleurone grain. Seed storage protein; serves as a source of nitrogen, carbon and sulfur for the young developing seedling. The sequence is that of Prolamin PPROL 14P (PROLM20) from Oryza sativa subsp. japonica (Rice).